The sequence spans 254 residues: Phosphoribosylaminoimidazole-succinocarboxamide synthase (254 aa).

It belongs to the SAICAR synthetase family.

The catalysed reaction is 5-amino-1-(5-phospho-D-ribosyl)imidazole-4-carboxylate + L-aspartate + ATP = (2S)-2-[5-amino-1-(5-phospho-beta-D-ribosyl)imidazole-4-carboxamido]succinate + ADP + phosphate + 2 H(+). Its pathway is purine metabolism; IMP biosynthesis via de novo pathway; 5-amino-1-(5-phospho-D-ribosyl)imidazole-4-carboxamide from 5-amino-1-(5-phospho-D-ribosyl)imidazole-4-carboxylate: step 1/2. The polypeptide is Phosphoribosylaminoimidazole-succinocarboxamide synthase (Brucella canis (strain ATCC 23365 / NCTC 10854 / RM-666)).